Consider the following 262-residue polypeptide: tRNA 4-demethylwyosine(37)-methyltransferase Taw21 (262 aa).

S-adenosyl-L-methionine-binding positions include His-108, Phe-125, 148–149 (DL), and 175–176 (DA).

This sequence belongs to the class I-like SAM-binding methyltransferase superfamily. TRM5/TYW2 family.

The protein resides in the cytoplasm. The catalysed reaction is 4-demethylwyosine(37) in tRNA(Phe) + S-adenosyl-L-methionine = isowyosine(37) in tRNA(Phe) + S-adenosyl-L-homocysteine + H(+). Its function is as follows. Catalyzes the C7-methylation of 4-demethylwyosine (imG-14) at position 37 in tRNA(Phe). The chain is tRNA 4-demethylwyosine(37)-methyltransferase Taw21 from Saccharolobus solfataricus (strain ATCC 35092 / DSM 1617 / JCM 11322 / P2) (Sulfolobus solfataricus).